A 262-amino-acid chain; its full sequence is Octanoyltransferase (262 aa).

The 192-residue stretch at 41–232 folds into the BPL/LPL catalytic domain; that stretch reads PQLPDGLLLL…SFCQVFGLQA (192 aa). Residues 96 to 103, 163 to 165, and 176 to 178 each bind substrate; these read RGGEVTYH, AIG, and GFA. C194 acts as the Acyl-thioester intermediate in catalysis.

The protein belongs to the LipB family.

The protein resides in the cytoplasm. The catalysed reaction is octanoyl-[ACP] + L-lysyl-[protein] = N(6)-octanoyl-L-lysyl-[protein] + holo-[ACP] + H(+). Its pathway is protein modification; protein lipoylation via endogenous pathway; protein N(6)-(lipoyl)lysine from octanoyl-[acyl-carrier-protein]: step 1/2. Its function is as follows. Catalyzes the transfer of endogenously produced octanoic acid from octanoyl-acyl-carrier-protein onto the lipoyl domains of lipoate-dependent enzymes. Lipoyl-ACP can also act as a substrate although octanoyl-ACP is likely to be the physiological substrate. The chain is Octanoyltransferase from Synechococcus sp. (strain JA-2-3B'a(2-13)) (Cyanobacteria bacterium Yellowstone B-Prime).